Reading from the N-terminus, the 208-residue chain is Thymidylate kinase (208 aa).

10 to 17 (GPEGSGKT) contributes to the ATP binding site.

Belongs to the thymidylate kinase family.

It catalyses the reaction dTMP + ATP = dTDP + ADP. Functionally, phosphorylation of dTMP to form dTDP in both de novo and salvage pathways of dTTP synthesis. In Bacillus cereus (strain 03BB102), this protein is Thymidylate kinase.